The sequence spans 163 residues: MRRLKQIIKSFTLWELLKGLSLTLRYFYRKKVTIHYPDEEVPSSFRFRGMLALRRYPNGEERCIACKLCEAVCPACAITIEAGPREADGSRRTTLYDIDAFKCINCGFCEEACPVDAIVLTPEMHYSIKDRGENILTKEKLLMIGDRYEEQIARDRAKDKKYR.

4Fe-4S ferredoxin-type domains lie at 53-83 (LRRY…IEAG) and 94-123 (TLYD…LTPE). 8 residues coordinate [4Fe-4S] cluster: Cys-63, Cys-66, Cys-69, Cys-73, Cys-103, Cys-106, Cys-109, and Cys-113.

The protein belongs to the complex I 23 kDa subunit family. NDH-1 is composed of 14 different subunits. Subunits NuoA, H, J, K, L, M, N constitute the membrane sector of the complex. It depends on [4Fe-4S] cluster as a cofactor.

Its subcellular location is the cell inner membrane. The enzyme catalyses a quinone + NADH + 5 H(+)(in) = a quinol + NAD(+) + 4 H(+)(out). Its function is as follows. NDH-1 shuttles electrons from NADH, via FMN and iron-sulfur (Fe-S) centers, to quinones in the respiratory chain. The immediate electron acceptor for the enzyme in this species is believed to be ubiquinone. Couples the redox reaction to proton translocation (for every two electrons transferred, four hydrogen ions are translocated across the cytoplasmic membrane), and thus conserves the redox energy in a proton gradient. This Coxiella burnetii (strain Dugway 5J108-111) protein is NADH-quinone oxidoreductase subunit I.